We begin with the raw amino-acid sequence, 86 residues long: Diphthamide biosynthesis protein 3 (86 aa).

The DPH-type MB domain occupies 4 to 60 (YHDEVEIEDFEYDEEEEMYYYPCPCGDRFQISKEELIEGEEVATCPSCSLVIKVIYD). The Fe cation site is built by Cys-26, Cys-28, Cys-48, and Cys-51.

It belongs to the DPH3 family. As to quaternary structure, component of the 2-(3-amino-3-carboxypropyl)histidine synthase complex composed of Dph1, Dph2, Dph3 and a NADH-dependent reductase. The cofactor is Fe(2+).

The catalysed reaction is [3Fe-4S](1+)-[protein] + Fe(2+)-[Dph3] = [3Fe-4S](0)-[protein] + Fe(3+)-[Dph3]. It carries out the reaction 2 [3Fe-4S](0)-[protein] + 2 Fe(2+)-[Dph3] + NADH = 2 [4Fe-4S](1+)-[protein] + 2 [Dph3] + NAD(+) + H(+). The protein operates within protein modification; peptidyl-diphthamide biosynthesis. Functionally, required for the first step of diphthamide biosynthesis, a post-translational modification of histidine which occurs in elongation factor 2. Dph1 and Dph2 transfer a 3-amino-3-carboxypropyl (ACP) group from S-adenosyl-L-methionine (SAM) to a histidine residue, the reaction is assisted by a reduction system comprising Dph3 and a NADH-dependent reductase. Acts as an electron donor to reduce the Fe-S cluster in Dph1-Dph2 keeping the [4Fe-4S] clusters in the active and reduced state. Restores iron to Dph1-Dph2 iron-sulfur clusters which have degraded from [4Fe-4S] to [3Fe-4S] by donating an iron atom to reform [4Fe-4S] clusters, in a manner dependent on the presence of elongation factor 2 and SAM. Associates with the elongator complex and is required for tRNA Wobble base modifications mediated by the elongator complex. The elongator complex is required for multiple tRNA modifications, including mcm5U (5-methoxycarbonylmethyl uridine), mcm5s 2U (5-methoxycarbonylmethyl-2-thiouridine), and ncm5U (5-carbamoylmethyl uridine). The protein is Diphthamide biosynthesis protein 3 of Drosophila melanogaster (Fruit fly).